A 231-amino-acid polypeptide reads, in one-letter code: Inner membrane protein YohK (231 aa).

Residue Met1 is a topological domain, periplasmic. The helical transmembrane segment at 2–22 (MANIWWSLPLTLIVFFAARKL) threads the bilayer. The Cytoplasmic segment spans residues 23 to 29 (AARYKFP). A helical membrane pass occupies residues 30 to 50 (LLNPLLVAMVVIIPFLMLTGI). Topologically, residues 51–90 (SYDSYFKGSEVLNDLLQPAVVALAYPLYEQLHQIRARWKS) are periplasmic. A helical transmembrane segment spans residues 91–111 (IITICFIGSVVAMVTGTSVAL). At 112–118 (LMGASPE) the chain is on the cytoplasmic side. 2 helical membrane passes run 119–139 (IAAS…VGGS) and 140–160 (IGGI…LGAV). Residues 161-208 (FGHTLLNAMRIRTKAARGLAMGTASHALGTARCAELDYQEGAFSSLAL) are Cytoplasmic-facing. Residues 209 to 229 (VLCGIITSLIAPFLFPIILAV) form a helical membrane-spanning segment. Residues 230–231 (MG) lie on the Periplasmic side of the membrane.

Belongs to the YohK (E.coli)/YwbG (IPA-22R) (B.subtilis) family.

The protein resides in the cell inner membrane. The protein is Inner membrane protein YohK (yohK) of Escherichia coli (strain K12).